A 979-amino-acid chain; its full sequence is UPF0182 protein Rv0064 (979 aa).

7 helical membrane passes run 19–41 (LVTA…DIYV), 63–85 (LAIV…LLAY), 114–136 (LFGW…FDWV), 174–196 (WLFV…FGGL), 208–230 (AARV…AYWL), 261–280 (LVLV…AIFL), and 285–307 (IPAM…WPLL). Positions 898 to 948 (GTGRVATARGGDAASAPPPGAGGPAPPQAVPPPRTTQPPAAPPRGPDVPPA) are disordered. Over residues 913–946 (APPPGAGGPAPPQAVPPPRTTQPPAAPPRGPDVP) the composition is skewed to pro residues.

Belongs to the UPF0182 family.

Its subcellular location is the cell membrane. This is UPF0182 protein Rv0064 from Mycobacterium tuberculosis (strain ATCC 25618 / H37Rv).